We begin with the raw amino-acid sequence, 160 residues long: Cyclic pyranopterin monophosphate synthase (160 aa).

Substrate is bound by residues 77–79 (MCH) and 114–115 (ME). The active site involves Asp129.

Belongs to the MoaC family. Homohexamer; trimer of dimers.

It carries out the reaction (8S)-3',8-cyclo-7,8-dihydroguanosine 5'-triphosphate = cyclic pyranopterin phosphate + diphosphate. It participates in cofactor biosynthesis; molybdopterin biosynthesis. Functionally, catalyzes the conversion of (8S)-3',8-cyclo-7,8-dihydroguanosine 5'-triphosphate to cyclic pyranopterin monophosphate (cPMP). In Listeria innocua serovar 6a (strain ATCC BAA-680 / CLIP 11262), this protein is Cyclic pyranopterin monophosphate synthase.